The primary structure comprises 251 residues: uncharacterized protein (251 aa).

The protein to M.jannaschii MJ1311.

This is an uncharacterized protein from Methanocaldococcus jannaschii (strain ATCC 43067 / DSM 2661 / JAL-1 / JCM 10045 / NBRC 100440) (Methanococcus jannaschii).